A 107-amino-acid polypeptide reads, in one-letter code: Nucleoid-associated protein BT_0257 (107 aa).

Belongs to the YbaB/EbfC family. As to quaternary structure, homodimer.

It localises to the cytoplasm. Its subcellular location is the nucleoid. Its function is as follows. Binds to DNA and alters its conformation. May be involved in regulation of gene expression, nucleoid organization and DNA protection. This chain is Nucleoid-associated protein BT_0257, found in Bartonella tribocorum (strain CIP 105476 / IBS 506).